Here is a 434-residue protein sequence, read N- to C-terminus: Glycerol-3-phosphate acyltransferase 3 (434 aa).

The chain crosses the membrane as a helical span at residues 14–34 (WLTLVLGFILLPSVFGVSLGI). Ser68 and Ser77 each carry phosphoserine. A run of 2 helical transmembrane segments spans residues 137-157 (ISLRLTMVWVLGVIVRYCVLL) and 161-181 (VTLAFIGISLLVIGTTLVGQL). Positions 229–234 (HTSPID) match the HXXXXD motif motif.

Belongs to the 1-acyl-sn-glycerol-3-phosphate acyltransferase family. Widely expressed. Expressed in liver, kidney, testis, brain, heart, skeletal muscle, thyroid, prostate, thymus and placenta. Also expressed lung and adipose tissue.

It localises to the endoplasmic reticulum membrane. The enzyme catalyses sn-glycerol 3-phosphate + an acyl-CoA = a 1-acyl-sn-glycero-3-phosphate + CoA. The catalysed reaction is a 1-acyl-sn-glycero-3-phosphate + an acyl-CoA = a 1,2-diacyl-sn-glycero-3-phosphate + CoA. It carries out the reaction dodecanoyl-CoA + sn-glycerol 3-phosphate = 1-dodecanoyl-sn-glycerol 3-phosphate + CoA. It catalyses the reaction sn-glycerol 3-phosphate + hexadecanoyl-CoA = 1-hexadecanoyl-sn-glycero-3-phosphate + CoA. The enzyme catalyses sn-glycerol 3-phosphate + (9Z)-octadecenoyl-CoA = 1-(9Z-octadecenoyl)-sn-glycero-3-phosphate + CoA. The catalysed reaction is (9Z,12Z)-octadecadienoyl-CoA + sn-glycerol 3-phosphate = 1-(9Z,12Z)-octadecadienoyl-sn-glycero-3-phosphate + CoA. It carries out the reaction 1-tetradecanoyl-sn-glycerol 3-phosphate + (9Z)-octadecenoyl-CoA = 1-tetradecanoyl-2-(9Z)-octadecenoyl-sn-glycero-3-phosphate + CoA. It catalyses the reaction 1-hexadecanoyl-sn-glycero-3-phosphate + (9Z)-octadecenoyl-CoA = 1-hexadecanoyl-2-(9Z-octadecenoyl)-sn-glycero-3-phosphate + CoA. The enzyme catalyses 1-(9Z-octadecenoyl)-sn-glycero-3-phosphate + (9Z)-octadecenoyl-CoA = 1,2-di-(9Z-octadecenoyl)-sn-glycero-3-phosphate + CoA. The catalysed reaction is 1-(6Z,9Z,12Z-octadecatrienoyl)-sn-glycero-3-phosphate + (9Z)-octadecenoyl-CoA = (6Z,9Z,12Z)-octadecatrienoyl-2-(9Z)-octadecenoyl-sn-glycero-3-phosphate + CoA. It carries out the reaction 1-(9Z,12Z,15Z)-octadecatrienoyl-sn-glycero-3-phosphate + (9Z)-octadecenoyl-CoA = 1-(9Z,12Z,15Z)-octadecatrienoyl-2-(9Z)-octadecenoyl-sn-glycero-3-phosphate + CoA. It catalyses the reaction 1-(9Z-octadecenoyl)-sn-glycero-3-phosphate + tetradecanoyl-CoA = 1-(9Z)-octadecenoyl-2-tetradecanoyl-sn-glycero-3-phosphate + CoA. The enzyme catalyses 1-(9Z-octadecenoyl)-sn-glycero-3-phosphate + hexadecanoyl-CoA = 1-(9Z)-octadecenoyl-2-hexadecanoyl-sn-glycero-3-phosphate + CoA. The catalysed reaction is 1-(9Z-octadecenoyl)-sn-glycero-3-phosphate + octadecanoyl-CoA = 1-(9Z-octadecenoyl)-2-octadecanoyl-sn-glycero-3-phosphate + CoA. It carries out the reaction 1-(9Z-octadecenoyl)-sn-glycero-3-phosphate + (9Z,12Z)-octadecadienoyl-CoA = 1-(9Z)-octadecenoyl-2-(9Z,12Z)-octadecadienoyl-sn-glycero-3-phosphate + CoA. It catalyses the reaction 1-(5Z,8Z,11Z,14Z-eicosatetraenoyl)-sn-glycero-3-phosphate + (9Z)-octadecenoyl-CoA = 1-(5Z,8Z,11Z,14Z)-eicosatetraenoyl-2-(9Z)-octadecenoyl-sn-glycero-3-phosphate + CoA. Its pathway is glycerolipid metabolism; triacylglycerol biosynthesis. The protein operates within phospholipid metabolism; CDP-diacylglycerol biosynthesis; CDP-diacylglycerol from sn-glycerol 3-phosphate: step 1/3. Inhibited by N-ethylmaleimide (NEM). In terms of biological role, converts glycerol-3-phosphate to 1-acyl-sn-glycerol-3-phosphate (lysophosphatidic acid or LPA) by incorporating an acyl moiety at the sn-1 position of the glycerol backbone. Also converts LPA into 1,2-diacyl-sn-glycerol-3-phosphate (phosphatidic acid or PA) by incorporating an acyl moiety at the sn-2 position of the glycerol backbone. Protects cells against lipotoxicity. The protein is Glycerol-3-phosphate acyltransferase 3 of Homo sapiens (Human).